Reading from the N-terminus, the 878-residue chain is MSLSLKTRRFGRPVRPQLVLLLLFALCLLSVFISAYYLYGWKRGLEPSGSEAQSPDCDEPKISPSRLLPVKPLKPVDSSRTDPLVLVFVESLYSQLGQEIVAILESSRFKYRTEIAPGKGDMPTLTDKDRGRFALIVYENILKYVNLDAWNRELLDKYCVEYGVGIIGFFKANENSLLSAQLKGFPLYLHSNLGLKDCSINPKSPLLYITRPNQVEKGDLPGEDWTVFQSNHSTYEPVLLAKTKSAESIPHLSVDAALHTTVVQDLGLHDGIQRVLFGNNLNFWLHKLVFVDAVSFLTGKRLSLPLNRYVLVDIDDIFVGKEGTRMKVEDVKALYDTQMELRTHIPNFTFNLGFSGKFFHTGTDAEDEGDDLLLSYVKQFWWFPHMWSHMQPHLFHNQSVLAEQMALNRKFAVDHGIPTDMGYAVAPHHSGVYPVHVQLYEAWKQIWGIKVTSTEEYPHLKPARYRRGFVHNGIMILPRQTCGLFTHTIFYNEYPGGPVELDKIINGGELFLTVLLNPISIFMTHLSNYGNDRLGLYTFKLLVQFLNTWTNLKLETLPPVQLAHKYFQIFPEEKDPLWQDPCEDKRHKDIWSKEKTCDRFPKLLIIGPQKTGTTALYLFLGMHSDLSSNYPSSETFEEIQFYNGQNYHKGIDWYMEFFPIPSNTTSDFYFEKSANYFDSELAPRRVAALLPKAKIITILINPADRAYSWYQHQRAHDDPVAIKYTFQEVIKAGPEAPQRLRALQNRCLVPGWYSTHIERWMNHFHANQILVLDGKLLRTEPANVMETVQKFLGVTNAMDYHKTLAFDPKKGFWCQLLDGGKTKCLGKSKGRKYPDMDSDSRSFLMDYYRDHNIELSKLLYKMGQTLPTWLREELQNTR.

The Cytoplasmic portion of the chain corresponds to 1-17 (MSLSLKTRRFGRPVRPQ). The tract at residues 1–169 (MSLSLKTRRF…VEYGVGIIGF (169 aa)) is sufficient for localization to Golgi membrane. A helical; Signal-anchor for type II membrane protein transmembrane segment spans residues 18–38 (LVLLLLFALCLLSVFISAYYL). The Lumenal portion of the chain corresponds to 39 to 878 (YGWKRGLEPS…WLREELQNTR (840 aa)). Residues 40 to 594 (GWKRGLEPSG…KRHKDIWSKE (555 aa)) form a heparan sulfate N-deacetylase 1 region. N-linked (GlcNAc...) asparagine glycosylation is found at Asn-231, Asn-347, and Asn-397. The tract at residues 595–878 (KTCDRFPKLL…WLREELQNTR (284 aa)) is heparan sulfate N-sulfotransferase 1. The active-site For sulfotransferase activity is the Lys-610. 610–614 (KTGTT) contributes to the adenosine 3',5'-bisphosphate binding site. Asn-663 carries an N-linked (GlcNAc...) asparagine glycan. Adenosine 3',5'-bisphosphate contacts are provided by Ser-708 and Trp-813. A disulfide bond links Cys-814 and Cys-824. 829–833 (KGRKY) is a binding site for adenosine 3',5'-bisphosphate.

The protein belongs to the sulfotransferase 1 family. NDST subfamily. As to quaternary structure, monomer.

The protein localises to the golgi apparatus membrane. Its subcellular location is the golgi apparatus. It localises to the trans-Golgi network membrane. It carries out the reaction alpha-D-glucosaminyl-[heparan sulfate](n) + 3'-phosphoadenylyl sulfate = N-sulfo-alpha-D-glucosaminyl-[heparan sulfate](n) + adenosine 3',5'-bisphosphate + 2 H(+). It functions in the pathway glycan metabolism; heparan sulfate biosynthesis. It participates in glycan metabolism; heparin biosynthesis. Essential bifunctional enzyme that catalyzes both the N-deacetylation and the N-sulfation of glucosamine (GlcNAc) of the glycosaminoglycan in heparan sulfate. Modifies the GlcNAc-GlcA disaccharide repeating sugar backbone to make N-sulfated heparosan, a prerequisite substrate for later modifications in heparin biosynthesis. Plays a role in determining the extent and pattern of sulfation of heparan sulfate. The chain is Bifunctional heparan sulfate N-deacetylase/N-sulfotransferase 1 (ndst1) from Xenopus laevis (African clawed frog).